Here is a 115-residue protein sequence, read N- to C-terminus: NADH-ubiquinone oxidoreductase chain 3 (115 aa).

The next 3 helical transmembrane spans lie at 4–24 (IMVI…AFWL), 55–75 (FFLV…LLPI), and 86–106 (TMML…AYEW).

Belongs to the complex I subunit 3 family. Core subunit of respiratory chain NADH dehydrogenase (Complex I) which is composed of 45 different subunits. Interacts with TMEM186. Interacts with TMEM242.

Its subcellular location is the mitochondrion inner membrane. The catalysed reaction is a ubiquinone + NADH + 5 H(+)(in) = a ubiquinol + NAD(+) + 4 H(+)(out). Its function is as follows. Core subunit of the mitochondrial membrane respiratory chain NADH dehydrogenase (Complex I) which catalyzes electron transfer from NADH through the respiratory chain, using ubiquinone as an electron acceptor. Essential for the catalytic activity of complex I. The protein is NADH-ubiquinone oxidoreductase chain 3 of Baiomys taylori (Northern pygmy mouse).